The following is a 768-amino-acid chain: Pentatricopeptide repeat-containing protein At3g53360, mitochondrial (768 aa).

Residues M1 to Y70 constitute a mitochondrion transit peptide. PPR repeat units follow at residues T30–N60, R66–Y100, D101–R131, N132–P166, D167–S201, H202–K232, D233–H267, N269–G303, N304–P334, D335–P369, D370–A404, D405–N435, D437–P471, D472–P506, E507–R537, D538–P572, N573–P608, and T609–E639. A type E motif region spans residues V644–E719. The type E(+) motif stretch occupies residues D720 to L750.

It belongs to the PPR family. PCMP-E subfamily.

It is found in the mitochondrion. The sequence is that of Pentatricopeptide repeat-containing protein At3g53360, mitochondrial (PCMP-E86) from Arabidopsis thaliana (Mouse-ear cress).